The chain runs to 478 residues: MDETSPLVSPERAQPPEYTFPSVSGAHFPQVPGGAVRVAAAGSGPSPPCSPGHDRERQPLLDRARGAAAQGQTHTVAAQAQALAAQAAVAVHAVQTHRERNDFPEDPEFEVVVRQAEIAIECSIYPERIYQGSSGSYFVKDSQGRIIAVFKPKNEEPYGNLNPKWTKWLQKLCCPCCFGRDCLVLNQGYLSEAGASLVDQKLELNIVPRTKVVYLASETFNYSAIDRVKSRGKRLALEKVPKVGQRFNRIGLPPKVGSFQLFVEGYKDADYWLRRFEAEPLPENTNRQLLLQFERLVVLDYIIRNTDRGNDNWLIKYDYPMDNPNCRDTDWVMVREPVIKVAAIDNGLAFPLKHPDSWRAYPFYWAWLPQAKVPFSQEIKDLILPKISDPNFVKDLEEDLYELFKKDPGFDRGQFHKQIAVMRGQILNLTQALKDNKSPLHLVQMPPVIVETARSHQRSSSESYTQSFQSRKPFFSWW.

An N-acetylmethionine modification is found at Met-1. Residues 1–57 form a disordered region; that stretch reads MDETSPLVSPERAQPPEYTFPSVSGAHFPQVPGGAVRVAAAGSGPSPPCSPGHDRER. A phosphoserine mark is found at Ser-5, Ser-9, Ser-43, Ser-46, and Ser-50. The segment covering 31 to 44 has biased composition (low complexity); sequence VPGGAVRVAAAGSG. Residues 123–452 enclose the PI3K/PI4K catalytic domain; the sequence is SIYPERIYQG…VQMPPVIVET (330 aa). The interval 129-135 is G-loop; sequence IYQGSSG. ATP contacts are provided by residues 130–136 and Lys-151; that span reads YQGSSGS. Residues 156–158 are important for substrate binding; it reads EPY. Residues 164–177 form an important for interaction with membranes region; sequence KWTKWLQKLCCPCC. 4 S-palmitoyl cysteine lipidation sites follow: Cys-173, Cys-174, Cys-176, and Cys-177. 260–263 serves as a coordination point for ATP; the sequence is QLFV. The important for interaction with membranes stretch occupies residues 267-275; the sequence is KDADYWLRR. The segment at 304 to 312 is catalytic loop; sequence RNTDRGNDN. The interval 343 to 363 is activation loop; the sequence is AIDNGLAFPLKHPDSWRAYPF. Asp-345 lines the ATP pocket. The segment at 358–367 is important for interaction with membranes; sequence WRAYPFYWAW. Phosphoserine is present on Ser-461.

Belongs to the PI3/PI4-kinase family. Type II PI4K subfamily. Associates with the BLOC-1 and the AP-3 complexes; the BLOC-1 complex is required for optimal binding of PI4K2A to the AP-3 complex. Interacts with BLOC1S5 and DTNBP1. Interacts with FOS; this interaction may enhance phosphatidylinositol phosphorylation activity. Interacts with ITCH. Interacts with ATG9A. Ubiquitinated by ITCH; this does not lead to proteasomal degradation. Post-translationally, palmitoylated. Palmitoylated by ZDHHC3 and ZDHHC7 in the CCPCC motif. Palmitoylation is cholesterol-dependent, and required for TGN localization. As to expression, detected in adult brain, especially in neurons in the cerebellum, brain cortex, dorsal root ganglion and spinal cord (at protein level).

It is found in the golgi apparatus. Its subcellular location is the trans-Golgi network membrane. The protein localises to the membrane raft. It localises to the endosome. The protein resides in the endosome membrane. It is found in the cytoplasmic vesicle. Its subcellular location is the cell projection. The protein localises to the dendrite. It localises to the presynaptic cell membrane. The protein resides in the synapse. It is found in the synaptosome. Its subcellular location is the mitochondrion. The protein localises to the membrane. It localises to the cell membrane. The protein resides in the perikaryon. It is found in the neuron projection. It catalyses the reaction a 1,2-diacyl-sn-glycero-3-phospho-(1D-myo-inositol) + ATP = a 1,2-diacyl-sn-glycero-3-phospho-(1D-myo-inositol 4-phosphate) + ADP + H(+). Membrane-bound phosphatidylinositol-4 kinase (PI4-kinase) that catalyzes the phosphorylation of phosphatidylinositol (PI) to phosphatidylinositol 4-phosphate (PI4P), a lipid that plays important roles in endocytosis, Golgi function, protein sorting and membrane trafficking and is required for prolonged survival of neurons. Besides, phosphorylation of phosphatidylinositol (PI) to phosphatidylinositol 4-phosphate (PI4P) is the first committed step in the generation of phosphatidylinositol 4,5-bisphosphate (PIP2), a precursor of the second messenger inositol 1,4,5-trisphosphate (InsP3). This Rattus norvegicus (Rat) protein is Phosphatidylinositol 4-kinase type 2-alpha (Pi4k2a).